The chain runs to 961 residues: Outer capsid protein VP2 (961 aa).

It belongs to the orbivirus VP2 family.

It localises to the virion. Functionally, the VP2 protein is one of the two proteins (with VP5) which constitute the virus particle outer capsid. It is the major target of the host immunogenic response. Responsible for viral attachment to target host cell, probably by binding to sialic acid. This attachment induces virion internalization predominantly through clathrin-dependent endocytosis. This is Outer capsid protein VP2 (Segment-2) from Antilocapra americana (Pronghorn).